We begin with the raw amino-acid sequence, 621 residues long: 1-deoxy-D-xylulose-5-phosphate synthase (621 aa).

Thiamine diphosphate contacts are provided by residues His-80 and 121 to 123 (GHS). Asp-152 serves as a coordination point for Mg(2+). Thiamine diphosphate is bound by residues 153 to 154 (GA), Asn-181, Tyr-288, and Glu-370. Position 181 (Asn-181) interacts with Mg(2+).

It belongs to the transketolase family. DXPS subfamily. Homodimer. It depends on Mg(2+) as a cofactor. Thiamine diphosphate is required as a cofactor.

The enzyme catalyses D-glyceraldehyde 3-phosphate + pyruvate + H(+) = 1-deoxy-D-xylulose 5-phosphate + CO2. Its pathway is metabolic intermediate biosynthesis; 1-deoxy-D-xylulose 5-phosphate biosynthesis; 1-deoxy-D-xylulose 5-phosphate from D-glyceraldehyde 3-phosphate and pyruvate: step 1/1. Functionally, catalyzes the acyloin condensation reaction between C atoms 2 and 3 of pyruvate and glyceraldehyde 3-phosphate to yield 1-deoxy-D-xylulose-5-phosphate (DXP). This Pseudoalteromonas atlantica (strain T6c / ATCC BAA-1087) protein is 1-deoxy-D-xylulose-5-phosphate synthase.